Consider the following 180-residue polypeptide: Protein SPMIP9 (180 aa).

Microtubule inner protein component of sperm flagellar doublet microtubules. Testis-specific. Detected in the germ cell lineage at all stages.

It is found in the nucleus. The protein localises to the cytoplasm. The protein resides in the cytoskeleton. Its subcellular location is the flagellum axoneme. Microtubule inner protein (MIP) part of the dynein-decorated doublet microtubules (DMTs) in flagella axoneme. The chain is Protein SPMIP9 from Homo sapiens (Human).